A 229-amino-acid chain; its full sequence is Allatostatin-A (229 aa).

An N-terminal signal peptide occupies residues 1-18 (MLSTSLPVCFLVIGAALC). A propeptide spanning residues 19-48 (APERMQNDPDPHDSTAQGSDNHSDHIAPLA) is cleaved from the precursor. A disordered region spans residues 23 to 46 (MQNDPDPHDSTAQGSDNHSDHIAP). Leucine amide is present on Leu-58. Residues 62-80 (AYSYVSEYKRLPVYNFGLG) constitute a propeptide that is removed on maturation. Leu-90 is modified (leucine amide). The propeptide occupies 94-130 (SVDEDQTNDDQQQIMNNDLDQAALAEFFDQYDDAGYE). Leucine amide is present on Leu-140. A propeptide spanning residues 144 to 152 (FADDDTSEE) is cleaved from the precursor. 5 positions are modified to leucine amide: Leu-162, Leu-173, Leu-184, Leu-196, and Leu-210. A propeptide spanning residues 214 to 229 (SADDASTEDSDNYFDV) is cleaved from the precursor.

It belongs to the allatostatin family. As to expression, allatostatin-A-1: Expressed in antennal lobe (AL), corpora cardiaca (CC), corpora allata (CA) and gnathal ganglion (GNG) (at protein level). Expression in AL and GNG detected in most animals, in CC and CA in some animals (at protein level). Allatostatin-A-3: Expressed in antennal lobe (AL), corpora cardiaca (CC), corpora allata (CA) and gnathal ganglion (GNG) (at protein level). Expression in AL detected in all animals, in GNG, CC and CA in most animals (at protein level). Allatostatin-A-4: Expressed in antennal lobe (AL), corpora cardiaca (CC), corpora allata (CA) and gnathal ganglion (GNG) in all animals (at protein level). Allatostatin-A-5: Expressed in antennal lobe (AL), corpora cardiaca (CC), corpora allata (CA) and gnathal ganglion (GNG) in all animals (at protein level). Allatostatin-A-6: Expressed in antennal lobe (AL) and gnathal ganglion (GNG) (at protein level). Expression in AL detected in some animals, in GNG in few animals (at protein level). Not expressed in corpora cardiaca (CC) and corpora allata (CA) (at protein level). Allatostatin-A-7: Expressed in antennal lobe (AL), corpora cardiaca (CC), corpora allata (CA) and gnathal ganglion (GNG) (at protein level). Expression in AL detected in all animals, in GNG, CC and CA in most animals (at protein level). Allatostatin-A-8: Expressed in antennal lobe (AL), corpora cardiaca (CC), corpora allata (CA) and gnathal ganglion (GNG) (at protein level). Expression in AL detected in all animals, in GNG, CC and CA in most animals (at protein level). Allatostatin-A-9: Expressed in antennal lobe (AL), corpora cardiaca (CC), corpora allata (CA) and gnathal ganglion (GNG) (at protein level). Expression in AL detected in all animals, in GNG in most animals and in CC and CA in some animals (at protein level).

It is found in the secreted. In terms of biological role, neuropeptide inhibitors of juvenile hormone synthesis and gut muscle contraction. The protein is Allatostatin-A of Agrotis ipsilon (Black cutworm moth).